A 401-amino-acid polypeptide reads, in one-letter code: Phosphoglycerate kinase (401 aa).

Residues 26-28 (DLN), Arg-41, 64-67 (HLGR), Arg-123, and Arg-156 contribute to the substrate site. ATP-binding positions include Lys-207, Gly-298, Glu-329, and 355–358 (GGDS).

It belongs to the phosphoglycerate kinase family. In terms of assembly, monomer.

It is found in the cytoplasm. It carries out the reaction (2R)-3-phosphoglycerate + ATP = (2R)-3-phospho-glyceroyl phosphate + ADP. It participates in carbohydrate degradation; glycolysis; pyruvate from D-glyceraldehyde 3-phosphate: step 2/5. The protein is Phosphoglycerate kinase of Bdellovibrio bacteriovorus (strain ATCC 15356 / DSM 50701 / NCIMB 9529 / HD100).